A 284-amino-acid polypeptide reads, in one-letter code: 2,3,4,5-tetrahydropyridine-2,6-dicarboxylate N-succinyltransferase (284 aa).

Substrate contacts are provided by R111 and D148.

Belongs to the transferase hexapeptide repeat family. In terms of assembly, homotrimer.

It localises to the cytoplasm. It carries out the reaction (S)-2,3,4,5-tetrahydrodipicolinate + succinyl-CoA + H2O = (S)-2-succinylamino-6-oxoheptanedioate + CoA. The protein operates within amino-acid biosynthesis; L-lysine biosynthesis via DAP pathway; LL-2,6-diaminopimelate from (S)-tetrahydrodipicolinate (succinylase route): step 1/3. The sequence is that of 2,3,4,5-tetrahydropyridine-2,6-dicarboxylate N-succinyltransferase from Brucella melitensis biotype 2 (strain ATCC 23457).